The sequence spans 314 residues: Ribosomal RNA small subunit methyltransferase H (314 aa).

S-adenosyl-L-methionine-binding positions include 40–42 (GGH), aspartate 60, phenylalanine 85, aspartate 107, and glutamine 114.

The protein belongs to the methyltransferase superfamily. RsmH family.

The protein localises to the cytoplasm. It catalyses the reaction cytidine(1402) in 16S rRNA + S-adenosyl-L-methionine = N(4)-methylcytidine(1402) in 16S rRNA + S-adenosyl-L-homocysteine + H(+). Its function is as follows. Specifically methylates the N4 position of cytidine in position 1402 (C1402) of 16S rRNA. This is Ribosomal RNA small subunit methyltransferase H from Hydrogenovibrio crunogenus (strain DSM 25203 / XCL-2) (Thiomicrospira crunogena).